The chain runs to 354 residues: Protein Wnt-8a (354 aa).

The first 19 residues, 1–19 (MGHLLMLWVAAGMCYPALG), serve as a signal peptide directing secretion. The cysteines at positions 54 and 65 are disulfide-linked. Asn-103 carries N-linked (GlcNAc...) asparagine glycosylation. 10 cysteine pairs are disulfide-bonded: Cys-104–Cys-112, Cys-114–Cys-132, Cys-180–Cys-194, Cys-182–Cys-189, Cys-259–Cys-297, Cys-275–Cys-290, Cys-294–Cys-336, Cys-312–Cys-327, Cys-314–Cys-324, and Cys-319–Cys-320. Ser-186 carries O-palmitoleoyl serine lipidation. Asn-262 carries an N-linked (GlcNAc...) asparagine glycan.

This sequence belongs to the Wnt family. As to quaternary structure, forms a soluble 1:1 complex with AFM; this prevents oligomerization and is required for prolonged biological activity. The complex with AFM may represent the physiological form in body fluids. Palmitoleoylation is required for efficient binding to frizzled receptors. Depalmitoleoylation leads to Wnt signaling pathway inhibition. In terms of processing, proteolytic processing by TIKI1 and TIKI2 promotes oxidation and formation of large disulfide-bond oligomers, leading to inactivation of WNT8A.

It is found in the secreted. The protein resides in the extracellular space. Its subcellular location is the extracellular matrix. Functionally, ligand for members of the frizzled family of seven transmembrane receptors. Plays a role in embryonic patterning. In Mus musculus (Mouse), this protein is Protein Wnt-8a (Wnt8a).